A 602-amino-acid polypeptide reads, in one-letter code: Aspartate--tRNA(Asp/Asn) ligase (602 aa).

Glu176 provides a ligand contact to L-aspartate. Residues 200-203 are aspartate; the sequence is QQFK. The L-aspartate site is built by Arg222 and His452. 222 to 224 is a binding site for ATP; the sequence is RDE. Glu490 serves as a coordination point for ATP. Arg497 contributes to the L-aspartate binding site. 542 to 545 is a binding site for ATP; that stretch reads GIDR.

The protein belongs to the class-II aminoacyl-tRNA synthetase family. Type 1 subfamily. In terms of assembly, homodimer.

The protein localises to the cytoplasm. The enzyme catalyses tRNA(Asx) + L-aspartate + ATP = L-aspartyl-tRNA(Asx) + AMP + diphosphate. Its function is as follows. Aspartyl-tRNA synthetase with relaxed tRNA specificity since it is able to aspartylate not only its cognate tRNA(Asp) but also tRNA(Asn). Reaction proceeds in two steps: L-aspartate is first activated by ATP to form Asp-AMP and then transferred to the acceptor end of tRNA(Asp/Asn). The protein is Aspartate--tRNA(Asp/Asn) ligase of Rickettsia bellii (strain OSU 85-389).